A 372-amino-acid chain; its full sequence is Putative glutamate--cysteine ligase 2 (372 aa).

This sequence belongs to the glutamate--cysteine ligase type 2 family. YbdK subfamily. Homodimer.

It catalyses the reaction L-cysteine + L-glutamate + ATP = gamma-L-glutamyl-L-cysteine + ADP + phosphate + H(+). ATP-dependent carboxylate-amine ligase which exhibits weak glutamate--cysteine ligase activity. In Salmonella paratyphi A (strain AKU_12601), this protein is Putative glutamate--cysteine ligase 2 (ybdK).